Consider the following 231-residue polypeptide: Cytochrome c oxidase subunit 2 (231 aa).

The Mitochondrial intermembrane portion of the chain corresponds to M1–S30. Residues L31–F51 traverse the membrane as a helical segment. The Mitochondrial matrix segment spans residues Y52–E64. Residues L65 to L85 traverse the membrane as a helical segment. The Mitochondrial intermembrane portion of the chain corresponds to L86–E231. Cu cation contacts are provided by H164, C199, E201, C203, H207, and M210. Residue E201 coordinates Mg(2+).

This sequence belongs to the cytochrome c oxidase subunit 2 family. As to quaternary structure, component of the cytochrome c oxidase (complex IV, CIV), a multisubunit enzyme composed of a catalytic core of 3 subunits and several supernumerary subunits. The complex exists as a monomer or a dimer and forms supercomplexes (SCs) in the inner mitochondrial membrane with ubiquinol-cytochrome c oxidoreductase (cytochrome b-c1 complex, complex III, CIII). Cu cation is required as a cofactor.

The protein localises to the mitochondrion inner membrane. The catalysed reaction is 4 Fe(II)-[cytochrome c] + O2 + 8 H(+)(in) = 4 Fe(III)-[cytochrome c] + 2 H2O + 4 H(+)(out). Functionally, component of the cytochrome c oxidase, the last enzyme in the mitochondrial electron transport chain which drives oxidative phosphorylation. The respiratory chain contains 3 multisubunit complexes succinate dehydrogenase (complex II, CII), ubiquinol-cytochrome c oxidoreductase (cytochrome b-c1 complex, complex III, CIII) and cytochrome c oxidase (complex IV, CIV), that cooperate to transfer electrons derived from NADH and succinate to molecular oxygen, creating an electrochemical gradient over the inner membrane that drives transmembrane transport and the ATP synthase. Cytochrome c oxidase is the component of the respiratory chain that catalyzes the reduction of oxygen to water. Electrons originating from reduced cytochrome c in the intermembrane space (IMS) are transferred via the dinuclear copper A center (CU(A)) of subunit 2 and heme A of subunit 1 to the active site in subunit 1, a binuclear center (BNC) formed by heme A3 and copper B (CU(B)). The BNC reduces molecular oxygen to 2 water molecules using 4 electrons from cytochrome c in the IMS and 4 protons from the mitochondrial matrix. The sequence is that of Cytochrome c oxidase subunit 2 (cox-2) from Caenorhabditis briggsae.